Reading from the N-terminus, the 208-residue chain is Methyl-CpG-binding domain protein 3-like 2 (208 aa).

Residues M1 to A89 are interacts with MBD3.

Belongs to the MBD3L family. Interacts (via N-terminus) with MBD3; the interaction is direct. Interacts with MTA1. Interacts with HDAC1. Interacts with HDAC2. Interacts with RBBP4. Interacts with RBBP7. In terms of tissue distribution, detected at low levels in several somatic tissues. Highly expressed in the ovarian teratocarcinoma cell line PA-1.

It is found in the nucleus. Functionally, may displace the NuRD complex from chromatin. This Homo sapiens (Human) protein is Methyl-CpG-binding domain protein 3-like 2 (MBD3L2).